The chain runs to 212 residues: Leucyl/phenylalanyl-tRNA--protein transferase (212 aa).

The protein belongs to the L/F-transferase family.

The protein resides in the cytoplasm. The catalysed reaction is N-terminal L-lysyl-[protein] + L-leucyl-tRNA(Leu) = N-terminal L-leucyl-L-lysyl-[protein] + tRNA(Leu) + H(+). It carries out the reaction N-terminal L-arginyl-[protein] + L-leucyl-tRNA(Leu) = N-terminal L-leucyl-L-arginyl-[protein] + tRNA(Leu) + H(+). The enzyme catalyses L-phenylalanyl-tRNA(Phe) + an N-terminal L-alpha-aminoacyl-[protein] = an N-terminal L-phenylalanyl-L-alpha-aminoacyl-[protein] + tRNA(Phe). Functions in the N-end rule pathway of protein degradation where it conjugates Leu, Phe and, less efficiently, Met from aminoacyl-tRNAs to the N-termini of proteins containing an N-terminal arginine or lysine. This is Leucyl/phenylalanyl-tRNA--protein transferase from Allorhizobium ampelinum (strain ATCC BAA-846 / DSM 112012 / S4) (Agrobacterium vitis (strain S4)).